The chain runs to 766 residues: Pentatricopeptide repeat-containing protein At5g28460 (766 aa).

PPR repeat units lie at residues threonine 151–asparagine 181, asparagine 184–phenylalanine 218, asparagine 221–proline 257, asparagine 258–leucine 292, glutamate 293–proline 327, aspartate 328–lysine 358, aspartate 369–proline 404, asparagine 405–proline 439, asparagine 440–glycine 474, asparagine 475–proline 509, aspartate 510–leucine 544, aspartate 545–proline 579, aspartate 580–proline 614, threonine 615–proline 650, asparagine 651–proline 685, and asparagine 686–proline 720.

This sequence belongs to the PPR family. P subfamily.

This chain is Pentatricopeptide repeat-containing protein At5g28460, found in Arabidopsis thaliana (Mouse-ear cress).